The sequence spans 451 residues: D-aminoacyl-tRNA deacylase (451 aa).

The tract at residues 410 to 437 (RTADIPEGPKFGKLASGESVEIDGEEID) is disordered.

It belongs to the DtdA deacylase family. As to quaternary structure, monomer. It depends on Zn(2+) as a cofactor.

It catalyses the reaction a D-aminoacyl-tRNA + H2O = a tRNA + a D-alpha-amino acid + H(+). The catalysed reaction is glycyl-tRNA(Ala) + H2O = tRNA(Ala) + glycine + H(+). D-aminoacyl-tRNA deacylase with broad substrate specificity. By recycling D-aminoacyl-tRNA to D-amino acids and free tRNA molecules, this enzyme counteracts the toxicity associated with the formation of D-aminoacyl-tRNA entities in vivo. The protein is D-aminoacyl-tRNA deacylase of Haloarcula marismortui (strain ATCC 43049 / DSM 3752 / JCM 8966 / VKM B-1809) (Halobacterium marismortui).